The following is a 220-amino-acid chain: MDAPIPTPAPIDLDTWPRRQHFDHYRRRVPCTYAMTVEVDVTAFAAALRRSPRKSYLAQVWALATVVNRHEEFRMCLNSSGDPAVWPVVHPAFTVFNPERETFACLWAPYDPDFGTFHDTAAPLLAEHSRATDFFPQGNPPPNAFDVSSLPWVSFTGFTLDIRDGWDHLAPIFTLGRYTERDTRLLLPLSVQIHHAAADGFHTARLTNELQTLLADPAWL.

Catalysis depends on H195, which acts as the Proton acceptor.

This sequence belongs to the chloramphenicol acetyltransferase family. In terms of assembly, homotrimer.

It catalyses the reaction chloramphenicol + acetyl-CoA = chloramphenicol 3-acetate + CoA. This enzyme is an effector of chloramphenicol resistance in bacteria. The polypeptide is Chloramphenicol acetyltransferase (cat) (Streptomyces acrimycini).